Here is a 300-residue protein sequence, read N- to C-terminus: MMGKEEEIARIARRLDKMVTKKSAEGAMDLLRELKAMPVTLHLLQSTRVGMSVNALRKQSSDEEVVTLAKSLIKSWKKLLDASDAKARERRRGGSLPTSSSKEASEAQDPSRKRPELPRMPSTPRITTFPPVPVTCDAVRTKCREMLTAALQTDHDHVAIGADCECLAGQIEECIFRDVGNTDMKYKNRVRSRLSNLKDAKNPGLRRKVLCGAITPQQIAVMTSEEMASDELKEIRKAMTKEAIREHQMARTGGTQTDLFTCGKCRKKNCTYTQVQTRSSDEPMTTFVVCNECGNRWKFC.

The 78-residue stretch at 6-83 folds into the TFIIS N-terminal domain; sequence EEIARIARRL…KSWKKLLDAS (78 aa). Residue K58 forms a Glycyl lysine isopeptide (Lys-Gly) (interchain with G-Cter in ubiquitin) linkage. A phosphoserine mark is found at S60 and S101. Residues 84–131 form a disordered region; it reads DAKARERRRGGSLPTSSSKEASEAQDPSRKRPELPRMPSTPRITTFPP. Basic and acidic residues predominate over residues 103–117; sequence EASEAQDPSRKRPEL. One can recognise a TFIIS central domain in the interval 139-255; it reads VRTKCREMLT…EHQMARTGGT (117 aa). A TFIIS-type zinc finger spans residues 258–298; it reads DLFTCGKCRKKNCTYTQVQTRSSDEPMTTFVVCNECGNRWK. Zn(2+)-binding residues include C262, C265, C290, and C293.

This sequence belongs to the TFS-II family. Interacts with the basal transcription factor GTF2B. Interacts with REXO1.

Its subcellular location is the nucleus. Its function is as follows. Necessary for efficient RNA polymerase II transcription elongation past template-encoded arresting sites. The arresting sites in DNA have the property of trapping a certain fraction of elongating RNA polymerases that pass through, resulting in locked ternary complexes. Cleavage of the nascent transcript by S-II allows the resumption of elongation from the new 3'-terminus. The polypeptide is Transcription elongation factor A protein 2 (TCEA2) (Bos taurus (Bovine)).